The chain runs to 134 residues: Small ribosomal subunit protein uS11 (134 aa).

Positions 1–21 (MPPKSRQGAGRKVRRKEKKNV) are disordered. Basic residues predominate over residues 9–21 (AGRKVRRKEKKNV).

This sequence belongs to the universal ribosomal protein uS11 family. As to quaternary structure, part of the 30S ribosomal subunit. Interacts with proteins S7 and S18. Binds to IF-3.

Located on the platform of the 30S subunit, it bridges several disparate RNA helices of the 16S rRNA. Forms part of the Shine-Dalgarno cleft in the 70S ribosome. The protein is Small ribosomal subunit protein uS11 of Thermobifida fusca (strain YX).